Consider the following 536-residue polypeptide: Alpha-1,3-mannosyl-glycoprotein 4-beta-N-acetylglucosaminyltransferase A (536 aa).

Topologically, residues 1–6 (MRLRNG) are cytoplasmic. The chain crosses the membrane as a helical; Signal-anchor for type II membrane protein span at residues 7–27 (TVATALVFITTFLSLSWYTAW). A coiled-coil region spans residues 28–54 (QNGKEKLMAYQREFHALKERLRIAEHR). Residues 28-536 (QNGKEKLMAY…EIHIKRNPAD (509 aa)) lie on the Lumenal side of the membrane. 2 N-linked (GlcNAc...) asparagine glycosylation sites follow: asparagine 77 and asparagine 458.

It belongs to the glycosyltransferase 54 family. A divalent metal cation serves as cofactor. N-glycosylated.

It localises to the golgi apparatus membrane. It is found in the secreted. The enzyme catalyses N(4)-{beta-D-GlcNAc-(1-&gt;2)-alpha-D-Man-(1-&gt;3)-[beta-D-GlcNAc-(1-&gt;2)-alpha-D-Man-(1-&gt;6)]-beta-D-Man-(1-&gt;4)-beta-D-GlcNAc-(1-&gt;4)-beta-D-GlcNAc}-L-asparaginyl-[protein] + UDP-N-acetyl-alpha-D-glucosamine = N(4)-{beta-D-GlcNAc-(1-&gt;2)-[beta-D-GlcNAc-(1-&gt;4)]-alpha-D-Man-(1-&gt;3)-[beta-D-GlcNAc-(1-&gt;2)-alpha-D-Man-(1-&gt;6)]-beta-D-Man-(1-&gt;4)-beta-D-GlcNAc-(1-&gt;4)-beta-D-GlcNAc}-L-asparaginyl-[protein] + UDP + H(+). The catalysed reaction is an N(4)-{beta-D-GlcNAc-(1-&gt;2)-alpha-D-Man-(1-&gt;3)-[alpha-D-Man-(1-&gt;6)]-beta-D-Man-(1-&gt;4)-beta-D-GlcNAc-(1-&gt;4)-beta-D-GlcNAc}-L-asparaginyl-[protein] + UDP-N-acetyl-alpha-D-glucosamine = an N(4)-{beta-D-GlcNAc-(1-&gt;2)-[beta-D-GlcNAc-(1-&gt;4)]-alpha-D-Man-(1-&gt;3)-[alpha-D-Man-(1-&gt;6)]-beta-D-Man-(1-&gt;4)-beta-D-GlcNAc-(1-&gt;4)-beta-D-GlcNAc}-L-asparaginyl-[protein] + UDP + H(+). It carries out the reaction an N(4)-{beta-D-GlcNAc-(1-&gt;2)-alpha-D-Man-(1-&gt;3)-[beta-D-GlcNAc-(1-&gt;2)-[beta-D-GlcNAc-(1-&gt;6)]-alpha-D-Man-(1-&gt;6)]-beta-D-Man-(1-&gt;4)-beta-D-GlcNAc-(1-&gt;4)-beta-D-GlcNAc}-L-asparaginyl-[protein] + UDP-N-acetyl-alpha-D-glucosamine = an N(4)-{beta-D-GlcNAc-(1-&gt;2)-[beta-D-GlcNAc-(1-&gt;4)]-alpha-D-Man-(1-&gt;3)-[beta-D-GlcNAc-(1-&gt;2)-[beta-D-GlcNAc-(1-&gt;6)]-alpha-D-Man-(1-&gt;6)]-beta-D-Man-(1-&gt;4)-beta-D-GlcNAc-(1-&gt;4)-beta-D-GlcNAc}-L-asparaginyl-[protein] + UDP + H(+). It catalyses the reaction an N(4)-{beta-D-GlcNAc-(1-&gt;2)-alpha-D-Man-(1-&gt;3)-[beta-D-GlcNAc-(1-&gt;2)-alpha-D-Man-(1-&gt;6)]-beta-D-Man-(1-&gt;4)-beta-D-GlcNAc-(1-&gt;4)-[alpha-L-Fuc-(1-&gt;6)]-beta-D-GlcNAc}-L-asparaginyl-[protein] + UDP-N-acetyl-alpha-D-glucosamine = N(4)-{beta-D-GlcNAc-(1-&gt;2)-[beta-D-GlcNAc-(1-&gt;4)]-alpha-D-Man-(1-&gt;3)-[beta-D-GlcNAc-(1-&gt;2)-alpha-D-Man-(1-&gt;6)]-beta-D-Man-(1-&gt;4)-beta-D-GlcNAc-(1-&gt;4)-[alpha-L-Fuc-(1-&gt;6)]-beta-D-GlcNAc}-asparaginyl-[protein] + UDP + H(+). The enzyme catalyses an N(4)-{beta-D-GlcNAc-(1-&gt;2)-alpha-D-Man-(1-&gt;3)-[beta-D-Gal-(1-&gt;4)-beta-D-GlcNAc-(1-&gt;2)-alpha-D-Man-(1-&gt;6)]-beta-D-Man-(1-&gt;4)-beta-D-GlcNAc-(1-&gt;4)-beta-D-GlcNAc}-L-asparaginyl-[protein] + UDP-N-acetyl-alpha-D-glucosamine = an N(4)-{beta-D-GlcNAc-(1-&gt;2)-[beta-D-GlcNAc-(1-&gt;4)]-alpha-D-Man-(1-&gt;3)-[beta-D-Gal-(1-&gt;4)-beta-D-GlcNAc-(1-&gt;2)-alpha-D-Man-(1-&gt;6)]-beta-D-Man-(1-&gt;4)-beta-D-GlcNAc-(1-&gt;4)-beta-D-GlcNAc}-L-asparaginyl-[protein] + UDP + H(+). The catalysed reaction is N(4)-{beta-D-GlcNAc-(1-&gt;2)-alpha-D-Man-(1-&gt;3)-[alpha-D-Man-(1-&gt;3)-{alpha-D-Man-(1-&gt;6)}-alpha-D-Man-(1-&gt;6)]-beta-D-Man-(1-&gt;4)-beta-D-GlcNAc-(1-&gt;4)-beta-D-GlcNAc}-asparaginyl-[protein] + UDP-N-acetyl-alpha-D-glucosamine = N(4)-{beta-D-GlcNAc-(1-&gt;2)-[beta-D-GlcNAc-(1-&gt;4)]-alpha-D-Man-(1-&gt;3)-[alpha-D-Man-(1-&gt;3)-{alpha-D-Man-(1-&gt;6)}-alpha-D-Man-(1-&gt;6)]-beta-D-Man-(1-&gt;4)-beta-D-GlcNAc-(1-&gt;4)-beta-D-GlcNAc}-asparaginyl-[protein] + UDP + H(+). It carries out the reaction N(4)-{beta-D-GlcNAc-(1-&gt;2)-alpha-D-Man-(1-&gt;3)-beta-D-Man-(1-&gt;4)-beta-D-GlcNAc-(1-&gt;4)-beta-D-GlcNAc}-asparaginyl-[protein] + UDP-N-acetyl-alpha-D-glucosamine = N(4)-{beta-D-GlcNAc-(1-&gt;2)-[beta-D-GlcNAc-(1-&gt;4)]-alpha-D-Man-(1-&gt;3)-beta-D-Man-(1-&gt;4)-beta-D-GlcNAc-(1-&gt;4)-beta-D-GlcNAc}-asparaginyl-[protein] + UDP + H(+). It participates in protein modification; protein glycosylation. Its activity is regulated as follows. Inhibited by UDP. Functionally, glycosyltransferase that catalyze the transfer of GlcNAc from UDP-GlcNAc to the GlcNAcbeta1-2Manalpha1-3 arm of the core structure of N-linked glycans through a beta1-4 linkage and participates in the production of tri- and tetra-antennary N-linked sugar chains. Involved in glucose transport by mediating SLC2A2/GLUT2 glycosylation, thereby controlling cell-surface expression of SLC2A2 in pancreatic beta cells. This is Alpha-1,3-mannosyl-glycoprotein 4-beta-N-acetylglucosaminyltransferase A from Xenopus tropicalis (Western clawed frog).